A 442-amino-acid polypeptide reads, in one-letter code: Elongation factor 1-alpha 1 (442 aa).

Residues 5–227 form the tr-type G domain; the sequence is KEHLNLVVIG…AALDSFKIPK (223 aa). Residues 14-21 are G1; it reads GHVDSGKS. 14–21 lines the GTP pocket; it reads GHVDSGKS. Residues 70–74 are G2; it reads GITID. The tract at residues 91-94 is G3; sequence DAPG. GTP contacts are provided by residues 91-95 and 153-156; these read DAPGH and NKMD. The G4 stretch occupies residues 153–156; the sequence is NKMD. The segment at 194–196 is G5; the sequence is SGF.

The protein belongs to the TRAFAC class translation factor GTPase superfamily. Classic translation factor GTPase family. EF-Tu/EF-1A subfamily.

The protein localises to the cytoplasm. Functionally, this protein promotes the GTP-dependent binding of aminoacyl-tRNA to the A-site of ribosomes during protein biosynthesis. The polypeptide is Elongation factor 1-alpha 1 (EFA1) (Euplotes crassus).